The following is a 785-amino-acid chain: B-cell scaffold protein with ankyrin repeats (785 aa).

The tract at residues 1–154 is interaction with ITPR2; that stretch reads MLPAAPGKGL…DYISVIQSII (154 aa). In terms of domain architecture, TIR spans 25 to 153; it reads NTKDIIMIYE…EDYISVIQSI (129 aa). Residues 200 to 327 enclose the DBB domain; that stretch reads VLPTEIPCEN…EIPYYEFQSL (128 aa). ANK repeat units follow at residues 342 to 371 and 378 to 408; these read ELPT…ATWA and EGSD…EIDI. Disordered stretches follow at residues 433–480, 493–514, 538–578, and 606–625; these read PAFH…SESS, GADP…LPPP, QMER…EDPY, and FIIN…PPKE. Residues 553–568 are compositionally biased toward basic and acidic residues; that stretch reads ETGDEPKGEKEKKEEE. A compositionally biased stretch (acidic residues) spans 569–578; the sequence is KEQEEEEDPY. Positions 611 to 621 are enriched in pro residues; the sequence is PPAPTPRPTSI.

Interacts with LYN, ITPR1 and ITPR2. Phosphorylated on tyrosines upon BCR activation. Expressed in B-cell but not T-cell or myeloid cell lines. Highest expression in CD19(+) B-cells, with very low expression in other cell populations.

Functionally, involved in B-cell receptor (BCR)-induced Ca(2+) mobilization from intracellular stores. Promotes Lyn-mediated phosphorylation of IP3 receptors 1 and 2. The polypeptide is B-cell scaffold protein with ankyrin repeats (BANK1) (Homo sapiens (Human)).